Here is a 571-residue protein sequence, read N- to C-terminus: Folylpolyglutamate synthase (571 aa).

Residue 122 to 125 (GKGS) participates in ATP binding. Mg(2+)-binding residues include Ser-146, Glu-215, and His-243. Residues Arg-363 and Asp-385 each contribute to the ATP site.

It belongs to the folylpolyglutamate synthase family. Requires a monovalent cation as cofactor. As to expression, expressed in both shoots and roots, but expression in roots is higher compared with shoots. Distinct expression in the quiescent center (QC) region of the root tip. Also expressed in vascular tissues of the cotyledons and hypocotyls, and the first true leaves of 7 days old seedlings.

Its subcellular location is the plastid. It is found in the chloroplast. The enzyme catalyses (6S)-5,6,7,8-tetrahydrofolyl-(gamma-L-Glu)(n) + L-glutamate + ATP = (6S)-5,6,7,8-tetrahydrofolyl-(gamma-L-Glu)(n+1) + ADP + phosphate + H(+). It participates in cofactor biosynthesis; tetrahydrofolylpolyglutamate biosynthesis. In terms of biological role, catalyzes conversion of folates to polyglutamate derivatives allowing concentration of folate compounds in the cell and the intracellular retention of these cofactors, which are important substrates for most of the folate-dependent enzymes that are involved in one-carbon transfer reactions involved in purine, pyrimidine and amino acid synthesis. Essential for organellar and whole-plant folate homeostasis. Required for postembryonic root development. Generates polyglutamylated folate cofactors to support C1 metabolism required for meristem maintenance and cell expansion during postembryonic root development. This is Folylpolyglutamate synthase from Arabidopsis thaliana (Mouse-ear cress).